Reading from the N-terminus, the 353-residue chain is Heterogeneous nuclear ribonucleoproteins A2/B1 (353 aa).

Met-1 carries the N-acetylmethionine modification. At Thr-4 the chain carries Phosphothreonine. Residues 9–15 carry the Nuclear localization signal motif; sequence PLERKKR. 2 RRM domains span residues 21-104 and 112-191; these read RKLF…ESGK and KKLF…LSRQ. A Glycyl lysine isopeptide (Lys-Gly) (interchain with G-Cter in SUMO2) cross-link involves residue Lys-22. Ser-29 carries the phosphoserine modification. Arg-38 carries the post-translational modification Omega-N-methylarginine. Ser-85 bears the Phosphoserine mark. Residue Lys-104 is modified to N6,N6-dimethyllysine; alternate. Lys-104 is covalently cross-linked (Glycyl lysine isopeptide (Lys-Gly) (interchain with G-Cter in SUMO2); alternate). Glycyl lysine isopeptide (Lys-Gly) (interchain with G-Cter in SUMO2) cross-links involve residues Lys-112, Lys-120, and Lys-137. Position 140 is a phosphothreonine (Thr-140). Ser-149 bears the Phosphoserine mark. Residue Lys-152 forms a Glycyl lysine isopeptide (Lys-Gly) (interchain with G-Cter in SUMO2) linkage. Thr-159 bears the Phosphothreonine mark. Residues Lys-168 and Lys-173 each participate in a glycyl lysine isopeptide (Lys-Gly) (interchain with G-Cter in SUMO2); alternate cross-link. N6-acetyllysine; alternate occurs at positions 168 and 173. Thr-176 carries the phosphothreonine modification. Lys-186 is covalently cross-linked (Glycyl lysine isopeptide (Lys-Gly) (interchain with G-Cter in SUMO2)). Phosphoserine occurs at positions 189 and 201. Residues 193-353 form a disordered region; the sequence is MQEVQSSRSG…SGGYGGRSRY (161 aa). Over residues 202 to 223 the composition is skewed to gly residues; that stretch reads GRGGNFGFGDSRGGGGNFGPGP. At Arg-203 the chain carries Asymmetric dimethylarginine; alternate. Arg-203 bears the Dimethylated arginine; alternate mark. The residue at position 203 (Arg-203) is an Omega-N-methylarginine; alternate. Ser-212 is modified (phosphoserine). Arg-213 is modified (asymmetric dimethylarginine; alternate). Arg-213 is modified (dimethylated arginine; alternate). Omega-N-methylarginine; alternate is present on Arg-213. At Ser-225 the chain carries Phosphoserine. At Arg-228 the chain carries Omega-N-methylarginine. A phosphoserine mark is found at Ser-231 and Ser-236. Arg-238 bears the Omega-N-methylarginine mark. Position 259 is a phosphoserine (Ser-259). Position 266 is an asymmetric dimethylarginine; alternate (Arg-266). Arg-266 is subject to Omega-N-methylarginine; alternate. Residues 308–347 form a nuclear targeting sequence region; that stretch reads QQPSNYGPMKSGNFGGSRNMGGPYGGGNYGPGGSGGSGGY. Residues 320–353 are compositionally biased toward gly residues; sequence NFGGSRNMGGPYGGGNYGPGGSGGSGGYGGRSRY. The residue at position 324 (Ser-324) is a Phosphoserine. An Omega-N-methylarginine modification is found at Arg-325. The residue at position 331 (Tyr-331) is a Phosphotyrosine. Phosphoserine is present on residues Ser-341 and Ser-344. Tyr-347 bears the Phosphotyrosine mark. Arg-350 is modified (omega-N-methylarginine).

In terms of assembly, homodimer; dimerization is required for nucleocytoplasmic translocation. Identified in the spliceosome C complex. Identified in a IGF2BP1-dependent mRNP granule complex containing untranslated mRNAs. Interacts with IGF2BP1. Interacts with C9orf72. Interacts with DGCR8. Interacts with TARDBP. Interacts with CKAP5. Interacts with TBK1. Interacts with STING1. Interacts with SRC. Interacts with PPIA/CYPA. Interacts (via C-terminus) with FAM76B; the interaction results in retention of HNRNPA2B1 in the nucleus and inhibition of the NF-kappa-B-mediated inflammatory pathway. Interacts with NF-kappa-B inhibitors NFKBIA and NFKBIE; the interaction may be mediated by the RRM2 domain of HNRNPA2B1, and HNRNPA2B1 may interact simultaneously with FAM76B and either NFKBIA or NFKBIE to form a complex. Post-translationally, asymmetric dimethylation at Arg-266 constitutes the major methylation site. According to a report, methylation affects subcellular location and promotes nuclear localization. According to another report, methylation at Arg-266 does not influence nucleocytoplasmic shuttling. Sumoylated in exosomes, promoting miRNAs-binding. In the brain, isoform A2 and isoform B1 are abundant in large ganglion-type neurons, such as Purkinje cells, and are less abundant in neighboring glia cells. Isoform A2 is more abundant than isoform B1 in brain. In testis, isoform A2 and isoform B1 are present in spermatogonia and spermatocytes, but not in spermatids or sperm. Isoform A2 is more abundant in the adrenal medulla than in the cortical cells. Isoform B1 is found in both adrenal medulla and cortical cells. Isoform A2 is more abundant than isoform B1 in the adrenal gland. Isoform A2 and isoform B1 are both detected in pancreas and kidney, and at lower levels in heart and lung. Isoform B1 is more abundant than isoform A2 in heart, lung and intestine (at protein level). Isoform A2b and isoform B1b are testis-specific.

It is found in the nucleus. The protein resides in the cytoplasm. The protein localises to the nucleoplasm. Its subcellular location is the cytoplasmic granule. It localises to the secreted. It is found in the extracellular exosome. Functionally, heterogeneous nuclear ribonucleoprotein (hnRNP) that associates with nascent pre-mRNAs, packaging them into hnRNP particles. The hnRNP particle arrangement on nascent hnRNA is non-random and sequence-dependent and serves to condense and stabilize the transcripts and minimize tangling and knotting. Packaging plays a role in various processes such as transcription, pre-mRNA processing, RNA nuclear export, subcellular location, mRNA translation and stability of mature mRNAs. Forms hnRNP particles with at least 20 other different hnRNP and heterogeneous nuclear RNA in the nucleus. Involved in transport of specific mRNAs to the cytoplasm in oligodendrocytes and neurons: acts by specifically recognizing and binding the A2RE (21 nucleotide hnRNP A2 response element) or the A2RE11 (derivative 11 nucleotide oligonucleotide) sequence motifs present on some mRNAs, and promotes their transport to the cytoplasm. Specifically binds single-stranded telomeric DNA sequences, protecting telomeric DNA repeat against endonuclease digestion. Also binds other RNA molecules, such as primary miRNA (pri-miRNAs): acts as a nuclear 'reader' of the N6-methyladenosine (m6A) mark by specifically recognizing and binding a subset of nuclear m6A-containing pri-miRNAs. Binding to m6A-containing pri-miRNAs promotes pri-miRNA processing by enhancing binding of DGCR8 to pri-miRNA transcripts. Involved in miRNA sorting into exosomes following sumoylation, possibly by binding (m6A)-containing pre-miRNAs. Acts as a regulator of efficiency of mRNA splicing, possibly by binding to m6A-containing pre-mRNAs. Plays a role in the splicing of pyruvate kinase PKM by binding repressively to sequences flanking PKM exon 9, inhibiting exon 9 inclusion and resulting in exon 10 inclusion and production of the PKM M2 isoform. Also plays a role in the activation of the innate immune response. Mechanistically, senses the presence of viral DNA in the nucleus, homodimerizes and is demethylated by JMJD6. In turn, translocates to the cytoplasm where it activates the TBK1-IRF3 pathway, leading to interferon alpha/beta production. This is Heterogeneous nuclear ribonucleoproteins A2/B1 from Rattus norvegicus (Rat).